The following is a 233-amino-acid chain: Cilia- and flagella-associated protein 299 (233 aa).

In terms of tissue distribution, abundantly expressed in testis, specifically in spermatogonia and primary spermatocytes but not in secondary spermatocytes and spermatids.

It localises to the cytoplasm. It is found in the nucleus. Functionally, may be involved in spermatogenesis. The protein is Cilia- and flagella-associated protein 299 of Mus musculus (Mouse).